A 327-amino-acid polypeptide reads, in one-letter code: Quinone oxidoreductase 1 (327 aa).

Residues 42-46, Tyr130, 152-153, 173-177, Tyr192, Ser216, 238-241, 264-266, and Arg317 each bind NADP(+); these read FIDTY, GV, GTAQK, FGNS, and PSL.

This sequence belongs to the zinc-containing alcohol dehydrogenase family. Quinone oxidoreductase subfamily. As to quaternary structure, homodimer.

It catalyses the reaction 2 a quinone + NADPH + H(+) = 2 a 1,4-benzosemiquinone + NADP(+). This Escherichia coli (strain K12) protein is Quinone oxidoreductase 1 (qorA).